A 360-amino-acid chain; its full sequence is NADH-quinone oxidoreductase subunit H (360 aa).

8 helical membrane passes run 20–40 (GMVWPVLWILLKIVALLIPLM), 95–115 (GLFVLGPVMAIMPALAAWVVI), 130–150 (LLLVMAITSIEVYGVIIAGWA), 176–196 (FCLLIVIMVSGSMNLTEIVLA), 206–226 (GIGFLSWNWLPLLPVFLVYLI), 261–281 (IFFLAEYASMWLVSILAALMF), 297–317 (IPGWIWLGIKTCLVVSMFIWI), and 336–356 (IFIPVTLACLLIAGGWLLSPW).

Belongs to the complex I subunit 1 family. NDH-1 is composed of 14 different subunits. Subunits NuoA, H, J, K, L, M, N constitute the membrane sector of the complex.

The protein resides in the cell inner membrane. The enzyme catalyses a quinone + NADH + 5 H(+)(in) = a quinol + NAD(+) + 4 H(+)(out). In terms of biological role, NDH-1 shuttles electrons from NADH, via FMN and iron-sulfur (Fe-S) centers, to quinones in the respiratory chain. The immediate electron acceptor for the enzyme in this species is believed to be ubiquinone. Couples the redox reaction to proton translocation (for every two electrons transferred, four hydrogen ions are translocated across the cytoplasmic membrane), and thus conserves the redox energy in a proton gradient. This subunit may bind ubiquinone. In Verminephrobacter eiseniae (strain EF01-2), this protein is NADH-quinone oxidoreductase subunit H.